Reading from the N-terminus, the 786-residue chain is ATP-dependent RNA helicase SUPV3L1, mitochondrial (786 aa).

The transit peptide at 1-22 (MSFSRALLWARLPAGRQAGHRA) directs the protein to the mitochondrion. Lys99 is modified (N6-acetyllysine). Positions 194-334 (DARAMQRKII…AIDLVMELMY (141 aa)) constitute a Helicase ATP-binding domain. Residue 207–214 (GPTNSGKT) participates in ATP binding. Position 220 is an N6-acetyllysine (Lys220). Residues 353-518 (VLDHALESLD…GLHPTAEQIE (166 aa)) form the Helicase C-terminal domain. Residues 650-786 (PDASLIRDLQ…RRKKKEPDSD (137 aa)) are interaction with LAMTOR5, important for protein stability. 2 disordered regions span residues 690–730 (GFPS…DAGE) and 749–786 (KQLE…PDSD). The span at 693 to 705 (SGSQSRLSGTLKS) shows a compositional bias: polar residues. Residue Ser725 is modified to Phosphoserine. The segment covering 749–771 (KQLEKEWMTQQTEHNKEKTESGT) has biased composition (basic and acidic residues).

Belongs to the helicase family. In terms of assembly, homodimer; in free form. Component of the mitochondrial degradosome (mtEXO) complex which is a heteropentamer containing 2 copies of SUPV3L1 and 3 copies of PNPT1. As part of mitochondrial degradosome complex, interacts with GRSF1 in a RNA-dependent manner; the interaction enhances the activity of the complex. Interacts with LAMTOR5/HBXIP, WRN and BLM. The cofactor is Mg(2+). Mn(2+) serves as cofactor. Broadly expressed.

It localises to the nucleus. It is found in the mitochondrion matrix. The protein resides in the mitochondrion nucleoid. The enzyme catalyses ATP + H2O = ADP + phosphate + H(+). Helicase activity toward DNA substrate is inhibited by micromolar concentrations of 5,6-dichloro-1-(beta-D-ribofuranosyl)benzotriazole (DRBT) and 4,5,6,7-tetrabromobenzotriazole (TBBT). Helicase activity toward RNA substrate is inhibited by elevated concentrations of TBBT. Inhibited by some ring-expanded nucleoside analogs. In terms of biological role, major helicase player in mitochondrial RNA metabolism. Component of the mitochondrial degradosome (mtEXO) complex, that degrades 3' overhang double-stranded RNA with a 3'-to-5' directionality in an ATP-dependent manner. Involved in the degradation of non-coding mitochondrial transcripts (MT-ncRNA) and tRNA-like molecules. ATPase and ATP-dependent multisubstrate helicase, able to unwind double-stranded (ds) DNA and RNA, and RNA/DNA heteroduplexes in the 5'-to-3' direction. Plays a role in the RNA surveillance system in mitochondria; regulates the stability of mature mRNAs, the removal of aberrantly formed mRNAs and the rapid degradation of non coding processing intermediates. Also implicated in recombination and chromatin maintenance pathways. May protect cells from apoptosis. Associates with mitochondrial DNA. This chain is ATP-dependent RNA helicase SUPV3L1, mitochondrial (SUPV3L1), found in Homo sapiens (Human).